The sequence spans 668 residues: tRNA 5-methylaminomethyl-2-thiouridine biosynthesis bifunctional protein MnmC (668 aa).

Residues Met1–Glu245 form a tRNA (mnm(5)s(2)U34)-methyltransferase region. The interval Ile270–Gly668 is FAD-dependent cmnm(5)s(2)U34 oxidoreductase.

It in the N-terminal section; belongs to the methyltransferase superfamily. tRNA (mnm(5)s(2)U34)-methyltransferase family. The protein in the C-terminal section; belongs to the DAO family. It depends on FAD as a cofactor.

The protein resides in the cytoplasm. It carries out the reaction 5-aminomethyl-2-thiouridine(34) in tRNA + S-adenosyl-L-methionine = 5-methylaminomethyl-2-thiouridine(34) in tRNA + S-adenosyl-L-homocysteine + H(+). Its function is as follows. Catalyzes the last two steps in the biosynthesis of 5-methylaminomethyl-2-thiouridine (mnm(5)s(2)U) at the wobble position (U34) in tRNA. Catalyzes the FAD-dependent demodification of cmnm(5)s(2)U34 to nm(5)s(2)U34, followed by the transfer of a methyl group from S-adenosyl-L-methionine to nm(5)s(2)U34, to form mnm(5)s(2)U34. The polypeptide is tRNA 5-methylaminomethyl-2-thiouridine biosynthesis bifunctional protein MnmC (Shigella dysenteriae serotype 1 (strain Sd197)).